The following is a 549-amino-acid chain: Frizzled/smoothened-like sans CRD protein A (549 aa).

The signal sequence occupies residues 1 to 22 (MKFNFKLILIILIINQILIINC). At 23–89 (KENKILEIYK…EVNTLSLMIK (67 aa)) the chain is on the extracellular side. A glycan (N-linked (GlcNAc...) asparagine) is linked at asparagine 63. Residues 90–110 (ITGTISFIASLILLLIYSPLI) form a helical membrane-spanning segment. The Cytoplasmic segment spans residues 111–119 (NRMGYNRHT). A helical transmembrane segment spans residues 120-140 (IGIFFLTFSVFLIMLTDIIYV). Residues 141 to 162 (HHGNDLICPQSHRYSRQNDSGC) lie on the Extracellular side of the membrane. N-linked (GlcNAc...) asparagine glycosylation is present at asparagine 158. The helical transmembrane segment at 163 to 183 (TITGILFQYGCIAAVLFWATL) threads the bilayer. At 184–198 (SLDLYLTLKKISTKK) the chain is on the cytoplasmic side. Residues 199-219 (VEKWYLIILTLIALILTFVPL) traverse the membrane as a helical segment. At 220 to 241 (VKKSYGYLVTGLACWILDSTDQ) the chain is on the extracellular side. The helical transmembrane segment at 242–262 (IIFFWAPFTAILGIGSILIVL) threads the bilayer. The Cytoplasmic portion of the chain corresponds to 263–287 (VVYEIYKISKITKQNRGIFQSHIRP). Residues 288 to 308 (LLMVLFIFGQFLFILAFNALI) form a helical membrane-spanning segment. Residues 309 to 346 (NNKYDEYSARMDSYIDCLFSSSSYSYLCRLKTFPFEME) are Extracellular-facing. A helical membrane pass occupies residues 347 to 367 (FIVLFFLRLIGIEVLIFYGFT). At 368–549 (QQTKKILLHS…NNNSNNDENN (182 aa)) the chain is on the cytoplasmic side. Low complexity-rich tracts occupy residues 417–474 (NNNN…SQQN) and 536–549 (NKNI…DENN). Disordered stretches follow at residues 417–483 (NNNN…QKLS) and 528–549 (QYEE…DENN). Positions 432-475 (NNLNNNLNNNNLNNNNNLNNLNNLNINNNLKNSQNNLNNSQQNE) form a coiled coil.

Belongs to the G-protein coupled receptor Fz/Smo family.

It is found in the membrane. The chain is Frizzled/smoothened-like sans CRD protein A (fscA) from Dictyostelium discoideum (Social amoeba).